A 580-amino-acid polypeptide reads, in one-letter code: Dihydroxy-acid dehydratase (580 aa).

A disordered region spans residues 1 to 31 (MPSGSSESPADALRASDSTPDIKPRSRDVTD). The span at 20–31 (PDIKPRSRDVTD) shows a compositional bias: basic and acidic residues. Position 69 (C69) interacts with [2Fe-2S] cluster. D101 lines the Mg(2+) pocket. C142 serves as a coordination point for [2Fe-2S] cluster. Mg(2+)-binding residues include D143 and K144. Position 144 is an N6-carboxylysine (K144). C219 is a [2Fe-2S] cluster binding site. Mg(2+) is bound at residue E470. S496 serves as the catalytic Proton acceptor.

It belongs to the IlvD/Edd family. Homodimer. The cofactor is [2Fe-2S] cluster. Mg(2+) serves as cofactor.

The catalysed reaction is (2R)-2,3-dihydroxy-3-methylbutanoate = 3-methyl-2-oxobutanoate + H2O. The enzyme catalyses (2R,3R)-2,3-dihydroxy-3-methylpentanoate = (S)-3-methyl-2-oxopentanoate + H2O. It functions in the pathway amino-acid biosynthesis; L-isoleucine biosynthesis; L-isoleucine from 2-oxobutanoate: step 3/4. Its pathway is amino-acid biosynthesis; L-valine biosynthesis; L-valine from pyruvate: step 3/4. Functionally, functions in the biosynthesis of branched-chain amino acids. Catalyzes the dehydration of (2R,3R)-2,3-dihydroxy-3-methylpentanoate (2,3-dihydroxy-3-methylvalerate) into 2-oxo-3-methylpentanoate (2-oxo-3-methylvalerate) and of (2R)-2,3-dihydroxy-3-methylbutanoate (2,3-dihydroxyisovalerate) into 2-oxo-3-methylbutanoate (2-oxoisovalerate), the penultimate precursor to L-isoleucine and L-valine, respectively. This is Dihydroxy-acid dehydratase from Mycobacterium sp. (strain JLS).